The chain runs to 73 residues: UPF0154 protein LGAS_0795 (73 aa).

A helical transmembrane segment spans residues 3–23 (LGLAIFLIIIALLIGLVGGFY).

It belongs to the UPF0154 family.

It is found in the cell membrane. This Lactobacillus gasseri (strain ATCC 33323 / DSM 20243 / BCRC 14619 / CIP 102991 / JCM 1131 / KCTC 3163 / NCIMB 11718 / NCTC 13722 / AM63) protein is UPF0154 protein LGAS_0795.